A 354-amino-acid chain; its full sequence is MTELKNDRYLRALLRQPVDVTPVWMMRQAGRYLPEYKATRAQAGDFMSLCKNAELACEVTLQPLRRYPLDAAILFSDILTIPDAMGLGLYFEAGEGPRFTSPVKSKADVDKLPIPDPEQELGYVMNAVRTIRRELKGEVPLIGFSGSPWTLATYMVEGGSSKAFTVIKKMMYAEPQALHALLDKLAKSVTLYLNAQIKAGAQSVMIFDTWGGVLTGRDYQQFSLYYMHKIVDGLLRENEGRRVPVTLFTKGGGQWLEAMAETGCDALGLDWTTDIADARRRVGNKVALQGNMDPSMLYASAPRIEEEVATILAGFGQGEGHVFNLGHGIHQDVDPEHAGVFVEAVHRLSAPYHQ.

Residues 27-31 (RQAGR), aspartate 77, tyrosine 154, threonine 209, and histidine 327 each bind substrate.

The protein belongs to the uroporphyrinogen decarboxylase family. Homodimer.

It localises to the cytoplasm. The enzyme catalyses uroporphyrinogen III + 4 H(+) = coproporphyrinogen III + 4 CO2. It functions in the pathway porphyrin-containing compound metabolism; protoporphyrin-IX biosynthesis; coproporphyrinogen-III from 5-aminolevulinate: step 4/4. Catalyzes the decarboxylation of four acetate groups of uroporphyrinogen-III to yield coproporphyrinogen-III. This chain is Uroporphyrinogen decarboxylase, found in Klebsiella pneumoniae subsp. pneumoniae (strain ATCC 700721 / MGH 78578).